Here is a 642-residue protein sequence, read N- to C-terminus: Threonine--tRNA ligase (642 aa).

The TGS domain occupies 1–61 (MPIITLPDGS…EADASLAIIT (61 aa)). Residues 243-534 (DHRKIGKQLD…LTEEYAGLFP (292 aa)) form a catalytic region. Positions 334, 385, and 511 each coordinate Zn(2+).

The protein belongs to the class-II aminoacyl-tRNA synthetase family. In terms of assembly, homodimer. Zn(2+) serves as cofactor.

It localises to the cytoplasm. The enzyme catalyses tRNA(Thr) + L-threonine + ATP = L-threonyl-tRNA(Thr) + AMP + diphosphate + H(+). Catalyzes the attachment of threonine to tRNA(Thr) in a two-step reaction: L-threonine is first activated by ATP to form Thr-AMP and then transferred to the acceptor end of tRNA(Thr). Also edits incorrectly charged L-seryl-tRNA(Thr). In Aeromonas hydrophila subsp. hydrophila (strain ATCC 7966 / DSM 30187 / BCRC 13018 / CCUG 14551 / JCM 1027 / KCTC 2358 / NCIMB 9240 / NCTC 8049), this protein is Threonine--tRNA ligase.